Here is a 201-residue protein sequence, read N- to C-terminus: Retinol-binding protein 4 (201 aa).

The N-terminal stretch at 1-18 is a signal peptide; that stretch reads MEWVWALVLLAALGSAQA. Cystine bridges form between C22–C178, C88–C192, and C138–C147. Q116 is a binding site for substrate. Residue R139 is modified to Omega-N-methylarginine.

This sequence belongs to the calycin superfamily. Lipocalin family. In terms of assembly, interacts with TTR. Interaction with TTR prevents its loss by filtration through the kidney glomeruli. Interacts with STRA6.

Its subcellular location is the secreted. Its function is as follows. Retinol-binding protein that mediates retinol transport in blood plasma. Delivers retinol from the liver stores to the peripheral tissues. Transfers the bound all-trans retinol to STRA6, that then facilitates retinol transport across the cell membrane. In Sus scrofa (Pig), this protein is Retinol-binding protein 4 (RBP4).